A 371-amino-acid polypeptide reads, in one-letter code: Histidinol-phosphate aminotransferase (371 aa).

Lys228 is modified (N6-(pyridoxal phosphate)lysine).

The protein belongs to the class-II pyridoxal-phosphate-dependent aminotransferase family. Histidinol-phosphate aminotransferase subfamily. As to quaternary structure, homodimer. Pyridoxal 5'-phosphate serves as cofactor.

The catalysed reaction is L-histidinol phosphate + 2-oxoglutarate = 3-(imidazol-4-yl)-2-oxopropyl phosphate + L-glutamate. Its pathway is amino-acid biosynthesis; L-histidine biosynthesis; L-histidine from 5-phospho-alpha-D-ribose 1-diphosphate: step 7/9. The chain is Histidinol-phosphate aminotransferase from Thermosynechococcus vestitus (strain NIES-2133 / IAM M-273 / BP-1).